We begin with the raw amino-acid sequence, 525 residues long: Probable protein kinase UbiB (525 aa).

The region spanning 119–501 (RFDHHPVASA…QRRTNRLLSA (383 aa)) is the Protein kinase domain. ATP-binding positions include 125–133 (VASASIAQV) and K151. D286 (proton acceptor) is an active-site residue. Residues 502-522 (ALLFIGGFAVGIIATHVLAWL) form a helical membrane-spanning segment.

Belongs to the ABC1 family. UbiB subfamily.

It localises to the cell inner membrane. The protein operates within cofactor biosynthesis; ubiquinone biosynthesis [regulation]. Functionally, is probably a protein kinase regulator of UbiI activity which is involved in aerobic coenzyme Q (ubiquinone) biosynthesis. The polypeptide is Probable protein kinase UbiB (Ralstonia nicotianae (strain ATCC BAA-1114 / GMI1000) (Ralstonia solanacearum)).